A 98-amino-acid chain; its full sequence is Integration host factor subunit alpha (98 aa).

The segment at 52 to 73 is disordered; that stretch reads FDLRQKSERPGRNPKTGEDIPI. The segment covering 54–73 has biased composition (basic and acidic residues); sequence LRQKSERPGRNPKTGEDIPI.

It belongs to the bacterial histone-like protein family. Heterodimer of an alpha and a beta chain.

Functionally, this protein is one of the two subunits of integration host factor, a specific DNA-binding protein that functions in genetic recombination as well as in transcriptional and translational control. The chain is Integration host factor subunit alpha from Pseudoalteromonas atlantica (strain T6c / ATCC BAA-1087).